The sequence spans 433 residues: Beta-agarase AgaA (433 aa).

Positions 1–20 are cleaved as a signal peptide; the sequence is MRKITSILLTCVMGCTATYA. In terms of domain architecture, GH16 spans 21 to 295; that stretch reads ADWDGVPVPA…WVRFYKPVPI (275 aa). Residue Glu-147 is the Nucleophile of the active site. Glu-152 acts as the Proton donor in catalysis. Positions 300–431 constitute a CBM6 domain; that stretch reads TTVELGNFHN…QWNGDEIRFV (132 aa).

This sequence belongs to the glycosyl hydrolase 16 family. Monomer.

The protein localises to the periplasm. The catalysed reaction is Hydrolysis of (1-&gt;4)-beta-D-galactosidic linkages in agarose, giving the tetramer as the predominant product.. With respect to regulation, activity is abolished by Hg(2+), Cu(2+), Pb(2+) and Zn(2+) ions, but is not affected by NaCl up to at least 1.0 M, Mg(2+), K(+) and Ca(2+). Not affected by iodoacetamide, p-chloromercuribenzoate, dithiothreitol, 2-mercaptoethanol, EDTA and sodium dodecyl sulfate. Inhibited by N-bromosuccinimide. Endo-type beta-agarase, which produces neoagarotetraose (NA4) as the main final product, with a small amount of neoagarohexaose (NA6) and neoagarobiose (NA2). The chain is Beta-agarase AgaA from Microbulbifer thermotolerans.